A 579-amino-acid chain; its full sequence is Mycobactin import ATP-binding/permease protein IrtB (579 aa).

The Cytoplasmic portion of the chain corresponds to 1–25; that stretch reads MIRTLLRLVPAEKRGAVAGYAVLTL. Residues 21-299 form the ABC transmembrane type-1 domain; sequence AVLTLLSVLL…IADLAPALET (279 aa). A helical membrane pass occupies residues 26–46; the sequence is LSVLLRAVGAVLLIPLLAALF. The Periplasmic segment spans residues 47–48; that stretch reads SD. The chain crosses the membrane as a helical span at residues 49–69; sequence TPSDAWLWLGWLTAVTLAGWV. Over 70 to 126 the chain is Cytoplasmic; sequence TDTNTARLGFDLGFAVLSRTQHDMADRLPNVAMSWFTPDNTATARQAIAATGPELAG. 2 consecutive transmembrane segments (helical) span residues 127–147 and 148–168; these read LVVN…AIGV and ALLF…AVLF. The Cytoplasmic segment spans residues 169–241; the sequence is GALALSGRLS…RLLTMQIPGQ (73 aa). Residues 242 to 262 traverse the membrane as a helical segment; the sequence is VLFSLAGQVALIGFAGMAVWL. Topologically, residues 263-272 are periplasmic; that stretch reads TVRGQLGVPE. Residues 273 to 293 form a helical membrane-spanning segment; it reads AIALIVVLVRYLEPFAAIADL. Residues 294–579 lie on the Cytoplasmic side of the membrane; it reads APALETTRAT…SEWAIGSTAR (286 aa). Residues 332–565 form the ABC transporter domain; sequence IEFDDVRFSY…GGRFAQFWAQ (234 aa). 364–371 lines the ATP pocket; that stretch reads GPSGSGKT.

Belongs to the ABC transporter superfamily. Siderophore-Fe(3+) uptake transporter (SIUT) (TC 3.A.1.21) family. Forms a heterodimer with IrtA.

It is found in the cell inner membrane. With respect to regulation, the ATPase activity of IrtAB is stimulated more than 38-fold in the presence of Fe-MBT, and more than 10-fold in the presence of Fe-cMBT. Its function is as follows. Part of the ABC transporter complex IrtAB involved in the import of iron-bound mycobactin (Fe-MBT) and carboxymycobactin (Fe-cMBT). Has a preference for Fe-MBT over Fe-cMBT. Transmembrane domains (TMD) form a pore in the membrane and the ATP-binding domain (NBD) is responsible for energy generation. This is Mycobactin import ATP-binding/permease protein IrtB from Mycolicibacterium thermoresistibile (strain ATCC 19527 / DSM 44167 / CIP 105390 / JCM 6362 / NCTC 10409 / 316) (Mycobacterium thermoresistibile).